A 316-amino-acid polypeptide reads, in one-letter code: Apolipoprotein E (316 aa).

Residues 1–18 form the signal peptide; that stretch reads MKVLWVALVITLLAGCQA. Tandem repeats lie at residues 79–100, 101–122, 123–144, 145–166, 167–188, 189–210, 211–232, and 233–254. The segment at 79–254 is 8 X 22 AA approximate tandem repeats; that stretch reads VLMDETMKEV…HLEEMREQLE (176 aa). Methionine 142 bears the Methionine sulfoxide mark. An LDL and other lipoprotein receptors binding region spans residues 157 to 167; it reads HLRKLRKRLLR. 161–164 is a heparin binding site; that stretch reads LRKR. Positions 209 to 289 are lipid-binding and lipoprotein association; sequence AATVGTLASQ…SWFEPLVEDM (81 aa). 228 to 235 serves as a coordination point for heparin; the sequence is HQKLRGRM. The interval 265–316 is homooligomerization; sequence SQMRLQAEAFQARLKSWFEPLVEDMQRQWAGLVEKVQLAMATSPTSAPIENS. The segment at 277 to 289 is specificity for association with VLDL; it reads RLKSWFEPLVEDM.

This sequence belongs to the apolipoprotein A1/A4/E family. In terms of assembly, homotetramer. May interact with ABCA1; functionally associated with ABCA1 in the biogenesis of HDLs. May interact with APP/A4 amyloid-beta peptide; the interaction is extremely stable in vitro but its physiological significance is unclear. May interact with MAPT. May interact with MAP2. In the cerebrospinal fluid, interacts with secreted SORL1. Interacts with PMEL; this allows the loading of PMEL luminal fragment on ILVs to induce fibril nucleation. APOE exists as multiple glycosylated and sialylated glycoforms within cells and in plasma. The extent of glycosylation and sialylation are tissue and context specific. In terms of processing, glycated in plasma VLDL. Post-translationally, phosphorylated by FAM20C in the extracellular medium.

The protein localises to the secreted. The protein resides in the extracellular space. It localises to the extracellular matrix. It is found in the extracellular vesicle. Its subcellular location is the endosome. The protein localises to the multivesicular body. Functionally, APOE is an apolipoprotein, a protein associating with lipid particles, that mainly functions in lipoprotein-mediated lipid transport between organs via the plasma and interstitial fluids. APOE is a core component of plasma lipoproteins and is involved in their production, conversion and clearance. Apolipoproteins are amphipathic molecules that interact both with lipids of the lipoprotein particle core and the aqueous environment of the plasma. As such, APOE associates with chylomicrons, chylomicron remnants, very low density lipoproteins (VLDL) and intermediate density lipoproteins (IDL) but shows a preferential binding to high-density lipoproteins (HDL). It also binds a wide range of cellular receptors including the LDL receptor/LDLR and the very low-density lipoprotein receptor/VLDLR that mediate the cellular uptake of the APOE-containing lipoprotein particles. Finally, APOE also has a heparin-binding activity and binds heparan-sulfate proteoglycans on the surface of cells, a property that supports the capture and the receptor-mediated uptake of APOE-containing lipoproteins by cells. This chain is Apolipoprotein E (APOE), found in Orcinus orca (Killer whale).